The chain runs to 404 residues: Nuclear receptor subfamily 2 group F member 6 (404 aa).

Positions 1–15 (MAMVTGGWGGPGGDT) are enriched in gly residues. Residues 1–49 (MAMVTGGWGGPGGDTNGVDKAGGYPRAAEDDSASPPGAASDAEPGDEER) are disordered. The segment covering 33 to 42 (ASPPGAASDA) has biased composition (low complexity). 2 positions are modified to phosphoserine: S34 and S40. Residues 53–128 (QVDCVVCGDK…VGMRKEAVQR (76 aa)) constitute a DNA-binding region (nuclear receptor). An NR C4-type zinc finger spans residues 56-76 (CVVCGDKSSGKHYGVFTCEGC). The residue at position 83 (S83) is a Phosphoserine. The NR C4-type zinc finger occupies 92–116 (CRSNRDCQIDQHHRNQCQYCRLKKC). One can recognise an NR LBD domain in the interval 165–393 (PVSELIAQLL…TLIRDMLLSG (229 aa)). Residues 327-404 (LQEKAQVALT…TFNWPYGSGQ (78 aa)) are important for dimerization.

The protein belongs to the nuclear hormone receptor family. NR2 subfamily. Binds DNA as dimer; homodimer and heterodimer with NR2F2 and probably NR2F1. Interacts with THRB. Expressed in heart, placenta, liver, skeletal muscle, kidney and pancreas.

Its subcellular location is the nucleus. Its function is as follows. Transcription factor predominantly involved in transcriptional repression. Binds to promoter/enhancer response elements that contain the imperfect 5'-AGGTCA-3' direct or inverted repeats with various spacings which are also recognized by other nuclear hormone receptors. Involved in modulation of hormonal responses. Represses transcriptional activity of the lutropin-choriogonadotropic hormone receptor/LHCGR gene, the renin/REN gene and the oxytocin-neurophysin/OXT gene. Represses the triiodothyronine-dependent and -independent transcriptional activity of the thyroid hormone receptor gene in a cell type-specific manner. The corepressing function towards thyroid hormone receptor beta/THRB involves at least in part the inhibition of THRB binding to triiodothyronine response elements (TREs) by NR2F6. Inhibits NFATC transcription factor DNA binding and subsequently its transcriptional activity. Acts as transcriptional repressor of IL-17 expression in Th-17 differentiated CD4(+) T cells and may be involved in induction and/or maintenance of peripheral immunological tolerance and autoimmunity. Involved in development of forebrain circadian clock; is required early in the development of the locus coeruleus (LC). In Homo sapiens (Human), this protein is Nuclear receptor subfamily 2 group F member 6 (NR2F6).